The primary structure comprises 148 residues: 3-dehydroquinate dehydratase (148 aa).

Y23 (proton acceptor) is an active-site residue. 3 residues coordinate substrate: N75, H81, and D88. Residue H101 is the Proton donor of the active site. Residues 102 to 103 (LS) and R112 each bind substrate.

Belongs to the type-II 3-dehydroquinase family. As to quaternary structure, homododecamer.

It catalyses the reaction 3-dehydroquinate = 3-dehydroshikimate + H2O. It functions in the pathway metabolic intermediate biosynthesis; chorismate biosynthesis; chorismate from D-erythrose 4-phosphate and phosphoenolpyruvate: step 3/7. Functionally, catalyzes a trans-dehydration via an enolate intermediate. This chain is 3-dehydroquinate dehydratase, found in Xanthomonas campestris pv. campestris (strain 8004).